A 368-amino-acid chain; its full sequence is Isopentenyl-diphosphate delta-isomerase (368 aa).

Position 7 to 8 (7 to 8) interacts with substrate; it reads RK. Residues Thr65, 66–68, Ser96, and Asn125 contribute to the FMN site; that span reads GMT. 96–98 is a substrate binding site; it reads SQR. Gln160 contacts substrate. Glu161 contributes to the Mg(2+) binding site. FMN contacts are provided by residues Lys193, Ser218, Thr223, 275-277, and 296-297; these read GIR and AL.

This sequence belongs to the IPP isomerase type 2 family. In terms of assembly, homooctamer. Dimer of tetramers. FMN is required as a cofactor. The cofactor is NADPH. It depends on Mg(2+) as a cofactor.

Its subcellular location is the cytoplasm. It catalyses the reaction isopentenyl diphosphate = dimethylallyl diphosphate. Involved in the biosynthesis of isoprenoids. Catalyzes the 1,3-allylic rearrangement of the homoallylic substrate isopentenyl (IPP) to its allylic isomer, dimethylallyl diphosphate (DMAPP). This is Isopentenyl-diphosphate delta-isomerase from Saccharolobus shibatae (strain ATCC 51178 / DSM 5389 / JCM 8931 / NBRC 15437 / B12) (Sulfolobus shibatae).